The chain runs to 626 residues: Serine/threonine-protein kinase PknH (626 aa).

At 1–403 the chain is on the cytoplasmic side; the sequence is MSDAQDSRVG…QTPRKTNPWP (403 aa). The Protein kinase domain maps to 16 to 276; it reads YHLKRLLGRG…DLALAAHEAL (261 aa). ATP is bound by residues 22-30 and K45; that span reads LGRGGMGEV. Catalysis depends on D139, which acts as the Proton acceptor. The residue at position 170 (T170) is a Phosphothreonine. Residues 292–396 form a disordered region; that stretch reads QESTLPAPPK…GGPSPWAQTP (105 aa). 2 stretches are compositionally biased toward pro residues: residues 297-308 and 316-342; these read PAPPKPVPPPTM and RQPPAPPVTPPGVQPAPKPSYTPPAQP. Low complexity predominate over residues 343–355; the sequence is GPAGQRPGPTGQP. The chain crosses the membrane as a helical span at residues 404–424; it reads LVAGAAAVVLVLVLGAIGIWI. The Extracellular portion of the chain corresponds to 425 to 626; sequence AIRPKPVQPP…AKIVDKVNKE (202 aa). 2 cysteine pairs are disulfide-bonded: C482/C545 and C587/C604.

The protein belongs to the protein kinase superfamily. Ser/Thr protein kinase family. Requires a divalent metal cation as cofactor. Post-translationally, autophosphorylated on threonine and serine residues. Dephosphorylated by PstP.

It localises to the cell membrane. The catalysed reaction is L-seryl-[protein] + ATP = O-phospho-L-seryl-[protein] + ADP + H(+). The enzyme catalyses L-threonyl-[protein] + ATP = O-phospho-L-threonyl-[protein] + ADP + H(+). Functionally, may regulate bacterial growth in response to external signals to facilitate adaptation to the host environment. This is Serine/threonine-protein kinase PknH (pknH) from Mycobacterium tuberculosis (strain CDC 1551 / Oshkosh).